We begin with the raw amino-acid sequence, 224 residues long: UPF0758 protein CJA_3522 (224 aa).

In terms of domain architecture, MPN spans 102-224 (LLSSPHLVRD…LVSLAERGWL (123 aa)). 3 residues coordinate Zn(2+): His-173, His-175, and Asp-186. The short motif at 173-186 (HNHPSGLAEPSQAD) is the JAMM motif element.

This sequence belongs to the UPF0758 family.

This is UPF0758 protein CJA_3522 from Cellvibrio japonicus (strain Ueda107) (Pseudomonas fluorescens subsp. cellulosa).